Here is a 504-residue protein sequence, read N- to C-terminus: Cytochrome P450 6B2 (504 aa).

Cys-445 contributes to the heme binding site.

It belongs to the cytochrome P450 family. Heme serves as cofactor.

Its subcellular location is the endoplasmic reticulum membrane. The protein localises to the microsome membrane. The catalysed reaction is an organic molecule + reduced [NADPH--hemoprotein reductase] + O2 = an alcohol + oxidized [NADPH--hemoprotein reductase] + H2O + H(+). The chain is Cytochrome P450 6B2 (CYP6B2) from Helicoverpa armigera (Cotton bollworm).